The following is a 241-amino-acid chain: Uracil-DNA glycosylase (241 aa).

The Proton acceptor role is filled by Asp-73.

The protein belongs to the uracil-DNA glycosylase (UDG) superfamily. UNG family.

The protein localises to the cytoplasm. The enzyme catalyses Hydrolyzes single-stranded DNA or mismatched double-stranded DNA and polynucleotides, releasing free uracil.. Its function is as follows. Excises uracil residues from the DNA which can arise as a result of misincorporation of dUMP residues by DNA polymerase or due to deamination of cytosine. The sequence is that of Uracil-DNA glycosylase from Agrobacterium fabrum (strain C58 / ATCC 33970) (Agrobacterium tumefaciens (strain C58)).